We begin with the raw amino-acid sequence, 638 residues long: MPPVTPLLDTVSSPADTRGLSIAQLRQLADEVRAETIDAVSQTGGHLGAGLGVVELTVALHHVYETPKDILIWDVGHQAYPHKILTGRRDRIRTLRQGGGLSGFTKRAESDYDPFGAAHAATSISAALGFCAARDREGRDNKVVAVIGDGSMSAGMAYEAMNNAYETTKQLTVILNDNDMSIAPPVGGMSAYMARLVSGGGYQSLRNLGKAVSRAFPRPLQEAARKAEEYARGMVTGGTFFEELGFYYVGPIDGHDMDALVHVLQNARKIDDKPVLVHVVTQKGKGYAPAEKAADKYHGVVKFDVVTGAQAKSQAAAPSYTKVFAQELVKHAERDERVVAITAAMPSGTGLDLFGQRFPERTFDVGIAEQHAVTFAAGLAADGMKPFAAIYSTFLQRGYDQVVHDVAIQSLPVRFAIDRAGLVGADGPTHAGSFDVGFMGQLPGMVVMGPADEAELARAIATAVAIDDRPSAFRYPRGEGVGVEIPALADPLEIGRGRIVREGTAVAILSFGTRLGESLKAADMLAARGLSATVADARFAKPLDVDLLLRLAREHEALITVEEGAVGGFGGFVLHALAEHGALDRGLKIRTLTLPDIFQDQDKPEAMYAQAGLDAEGIVRAALAALGIDNASVKGRRA.

Thiamine diphosphate-binding positions include H77 and 118-120 (AHA). A Mg(2+)-binding site is contributed by D149. Thiamine diphosphate contacts are provided by residues 150 to 151 (GS), N178, Y287, and E369. Mg(2+) is bound at residue N178.

This sequence belongs to the transketolase family. DXPS subfamily. As to quaternary structure, homodimer. Requires Mg(2+) as cofactor. Thiamine diphosphate is required as a cofactor.

It carries out the reaction D-glyceraldehyde 3-phosphate + pyruvate + H(+) = 1-deoxy-D-xylulose 5-phosphate + CO2. It functions in the pathway metabolic intermediate biosynthesis; 1-deoxy-D-xylulose 5-phosphate biosynthesis; 1-deoxy-D-xylulose 5-phosphate from D-glyceraldehyde 3-phosphate and pyruvate: step 1/1. In terms of biological role, catalyzes the acyloin condensation reaction between C atoms 2 and 3 of pyruvate and glyceraldehyde 3-phosphate to yield 1-deoxy-D-xylulose-5-phosphate (DXP). This chain is 1-deoxy-D-xylulose-5-phosphate synthase, found in Phenylobacterium zucineum (strain HLK1).